We begin with the raw amino-acid sequence, 145 residues long: Peptide methionine sulfoxide reductase MsrB (145 aa).

The MsrB domain maps to 4-127 (SEELKQRIGD…NSAALKFIPY (124 aa)). The active-site Nucleophile is cysteine 116.

This sequence belongs to the MsrB Met sulfoxide reductase family.

It catalyses the reaction L-methionyl-[protein] + [thioredoxin]-disulfide + H2O = L-methionyl-(R)-S-oxide-[protein] + [thioredoxin]-dithiol. This chain is Peptide methionine sulfoxide reductase MsrB, found in Streptococcus pyogenes serotype M6 (strain ATCC BAA-946 / MGAS10394).